Consider the following 144-residue polypeptide: Cytochrome c oxidase subunit 4 isoform 1, mitochondrial (144 aa).

Residues 1–73 (SVVKSEDFSL…SFAEMNRGSN (73 aa)) are Mitochondrial matrix-facing. At lysine 4 the chain carries N6-acetyllysine; alternate. Residue lysine 4 is modified to N6-succinyllysine; alternate. Lysine 28 is subject to N6-acetyllysine. A phosphoserine mark is found at serine 31 and serine 33. An N6-acetyllysine; alternate modification is found at lysine 35. At lysine 35 the chain carries N6-succinyllysine; alternate. Lysine 42 bears the N6-acetyllysine mark. Residues 74-99 (EWKTVVGGAMFFIGFTALVIMWQKHY) form a helical membrane-spanning segment. Residues 100 to 144 (VYGPLPQSFDKEWVAKQTKRMLDMKVNPIQGLASKWDYEKNEWKK) are Mitochondrial intermembrane-facing.

Belongs to the cytochrome c oxidase IV family. Component of the cytochrome c oxidase (complex IV, CIV), a multisubunit enzyme composed of 14 subunits. The complex is composed of a catalytic core of 3 subunits MT-CO1, MT-CO2 and MT-CO3, encoded in the mitochondrial DNA, and 11 supernumerary subunits COX4I, COX5A, COX5B, COX6A, COX6B, COX6C, COX7A, COX7B, COX7C, COX8 and NDUFA4, which are encoded in the nuclear genome. The complex exists as a monomer or a dimer and forms supercomplexes (SCs) in the inner mitochondrial membrane with NADH-ubiquinone oxidoreductase (complex I, CI) and ubiquinol-cytochrome c oxidoreductase (cytochrome b-c1 complex, complex III, CIII), resulting in different assemblies (supercomplex SCI(1)III(2)IV(1) and megacomplex MCI(2)III(2)IV(2)). Interacts with PHB2; the interaction decreases in absence of SPHK2. Interacts with AFG1L. Interacts with ABCB7; this interaction allows the regulation of cellular iron homeostasis and cellular reactive oxygen species (ROS) levels in cardiomyocytes. Interacts with FLVCR2; this interaction occurs in the absence of heme and is disrupted upon heme binding. Interacts with IRGC.

Its subcellular location is the mitochondrion inner membrane. The protein operates within energy metabolism; oxidative phosphorylation. Its function is as follows. Component of the cytochrome c oxidase, the last enzyme in the mitochondrial electron transport chain which drives oxidative phosphorylation. The respiratory chain contains 3 multisubunit complexes succinate dehydrogenase (complex II, CII), ubiquinol-cytochrome c oxidoreductase (cytochrome b-c1 complex, complex III, CIII) and cytochrome c oxidase (complex IV, CIV), that cooperate to transfer electrons derived from NADH and succinate to molecular oxygen, creating an electrochemical gradient over the inner membrane that drives transmembrane transport and the ATP synthase. Cytochrome c oxidase is the component of the respiratory chain that catalyzes the reduction of oxygen to water. Electrons originating from reduced cytochrome c in the intermembrane space (IMS) are transferred via the dinuclear copper A center (CU(A)) of subunit 2 and heme A of subunit 1 to the active site in subunit 1, a binuclear center (BNC) formed by heme A3 and copper B (CU(B)). The BNC reduces molecular oxygen to 2 water molecules using 4 electrons from cytochrome c in the IMS and 4 protons from the mitochondrial matrix. This chain is Cytochrome c oxidase subunit 4 isoform 1, mitochondrial (COX4I1), found in Gorilla gorilla gorilla (Western lowland gorilla).